The sequence spans 311 residues: Malate dehydrogenase (311 aa).

NAD(+) contacts are provided by residues 7 to 13 (GAAGGIG) and D34. 2 residues coordinate substrate: R81 and R87. NAD(+) contacts are provided by residues N94 and 117-119 (ITN). Residues N119 and R153 each coordinate substrate. Residue H177 is the Proton acceptor of the active site. M227 serves as a coordination point for NAD(+).

Belongs to the LDH/MDH superfamily. MDH type 1 family. Homodimer.

It carries out the reaction (S)-malate + NAD(+) = oxaloacetate + NADH + H(+). Functionally, catalyzes the reversible oxidation of malate to oxaloacetate. The chain is Malate dehydrogenase from Pseudoalteromonas atlantica (strain T6c / ATCC BAA-1087).